The sequence spans 391 residues: Chaperone protein DnaJ (391 aa).

The region spanning 4-68 (DFYDVLGVSR…ETRQQYDQLG (65 aa)) is the J domain. Over residues 53 to 79 (DVLTDEETRQQYDQLGHERFEEAEKRG) the composition is skewed to basic and acidic residues. Disordered regions lie at residues 53-94 (DVLT…MGGA) and 117-136 (FFGG…EQGR). Gly residues-rich tracts occupy residues 81-94 (TGNG…MGGA) and 119-129 (GGAGGGGGRGR). A CR-type zinc finger spans residues 152–234 (GVSKQVTVRR…CGGQGQTRER (83 aa)). Zn(2+) contacts are provided by Cys165, Cys168, Cys182, Cys185, Cys208, Cys211, Cys222, and Cys225. CXXCXGXG motif repeat units follow at residues 165–172 (CADCGGSG), 182–189 (CPQCDGQG), 208–215 (CSRCGGEG), and 222–229 (CSTCGGQG).

The protein belongs to the DnaJ family. Homodimer. It depends on Zn(2+) as a cofactor.

It is found in the cytoplasm. Its function is as follows. Participates actively in the response to hyperosmotic and heat shock by preventing the aggregation of stress-denatured proteins and by disaggregating proteins, also in an autonomous, DnaK-independent fashion. Unfolded proteins bind initially to DnaJ; upon interaction with the DnaJ-bound protein, DnaK hydrolyzes its bound ATP, resulting in the formation of a stable complex. GrpE releases ADP from DnaK; ATP binding to DnaK triggers the release of the substrate protein, thus completing the reaction cycle. Several rounds of ATP-dependent interactions between DnaJ, DnaK and GrpE are required for fully efficient folding. Also involved, together with DnaK and GrpE, in the DNA replication of plasmids through activation of initiation proteins. The polypeptide is Chaperone protein DnaJ (Halobacterium salinarum (strain ATCC 29341 / DSM 671 / R1)).